The sequence spans 121 residues: Small ribosomal subunit protein uS13 (121 aa).

The disordered stretch occupies residues 94 to 121 (GLPVRGQSSKTNARTVKGPRKTVANKKK). The span at 110 to 121 (KGPRKTVANKKK) shows a compositional bias: basic residues.

Belongs to the universal ribosomal protein uS13 family. Part of the 30S ribosomal subunit. Forms a loose heterodimer with protein S19. Forms two bridges to the 50S subunit in the 70S ribosome.

Functionally, located at the top of the head of the 30S subunit, it contacts several helices of the 16S rRNA. In the 70S ribosome it contacts the 23S rRNA (bridge B1a) and protein L5 of the 50S subunit (bridge B1b), connecting the 2 subunits; these bridges are implicated in subunit movement. Contacts the tRNAs in the A and P-sites. The sequence is that of Small ribosomal subunit protein uS13 from Mesoplasma florum (strain ATCC 33453 / NBRC 100688 / NCTC 11704 / L1) (Acholeplasma florum).